We begin with the raw amino-acid sequence, 137 residues long: Large-conductance mechanosensitive channel (137 aa).

Transmembrane regions (helical) follow at residues 10-30 (FAMR…AAFG) and 76-96 (GAFI…FMAI).

The protein belongs to the MscL family. In terms of assembly, homopentamer.

It is found in the cell inner membrane. Functionally, channel that opens in response to stretch forces in the membrane lipid bilayer. May participate in the regulation of osmotic pressure changes within the cell. The chain is Large-conductance mechanosensitive channel from Pectobacterium carotovorum subsp. carotovorum (strain PC1).